The primary structure comprises 2376 residues: Protein Ycf2 (2376 aa).

3 disordered regions span residues 173–194 (SSQL…GTED), 226–256 (TEIE…EMNN), and 952–1011 (KRKK…KRKE). Residues 235 to 245 (KGLSGSSSKSR) are compositionally biased toward low complexity. 2 stretches are compositionally biased toward basic and acidic residues: residues 246-255 (LFTEGEKEMN) and 960-1009 (KRKE…PEKR). 1441–1448 (GSIGSGRS) provides a ligand contact to ATP. Disordered regions lie at residues 1515 to 1534 (YEDR…DYEP), 1860 to 2046 (LVGS…LRPK), and 2112 to 2230 (PAEE…DGFS). Positions 1866 to 2025 (TEEEVEGTEE…GEGTEDEEGE (160 aa)) are enriched in acidic residues. Residues 2026–2038 (GTEKDSSQFDNDR) show a composition bias toward basic and acidic residues. 2 stretches are compositionally biased toward acidic residues: residues 2112–2129 (PAEE…EALE) and 2136–2213 (GEEE…ENDS).

It belongs to the Ycf2 family.

It is found in the plastid. Its subcellular location is the chloroplast stroma. Its function is as follows. Probable ATPase of unknown function. Its presence in a non-photosynthetic plant (Epifagus virginiana) and experiments in tobacco indicate that it has an essential function which is probably not related to photosynthesis. The protein is Protein Ycf2 of Oenothera glazioviana (Large-flowered evening primrose).